The sequence spans 362 residues: Homeobox-leucine zipper protein HOX11 (362 aa).

Over residues 27–45 (REEAAEAGRRDHEVRRELE) the composition is skewed to basic and acidic residues. Residues 27–179 (REEAAEAGRR…DDGGSARKKL (153 aa)) form a disordered region. Over residues 64-75 (LTLLPMVPGLGL) the composition is skewed to low complexity. Residues 126 to 135 (LSSSPNNSAG) show a composition bias toward polar residues. The segment covering 145-160 (HGLGGNDAAPGGGGGD) has biased composition (gly residues). The segment at residues 174 to 233 (SARKKLRLSKEQSAFLEESFKEHSTLNPKQKLALAKQLNLRPRQVEVWFQNRRARTKLKQ) is a DNA-binding region (homeobox). The interval 232–276 (KQTEVDCEYLKRCCETLTEENRRLQKELAELRALKTVHPFYMHLP) is leucine-zipper. A disordered region spans residues 301–330 (AATSSTAAPPAAPSSGGIAATSSSAAAAAA).

It belongs to the HD-ZIP homeobox family. Class II subfamily. As to expression, expressed in stems, leaf sheaths and blades and panicles.

The protein localises to the nucleus. In terms of biological role, probable transcription factor. The sequence is that of Homeobox-leucine zipper protein HOX11 (HOX11) from Oryza sativa subsp. japonica (Rice).